Consider the following 306-residue polypeptide: Ribosomal RNA small subunit methyltransferase H (306 aa).

S-adenosyl-L-methionine is bound by residues 36–38, Asp-56, Phe-80, Asp-97, and Gln-104; that span reads GGH. The disordered stretch occupies residues 280–306; that stretch reads ASEEEVAGNPRSRSAVMRVAERTGEAA.

The protein belongs to the methyltransferase superfamily. RsmH family.

The protein resides in the cytoplasm. The enzyme catalyses cytidine(1402) in 16S rRNA + S-adenosyl-L-methionine = N(4)-methylcytidine(1402) in 16S rRNA + S-adenosyl-L-homocysteine + H(+). Functionally, specifically methylates the N4 position of cytidine in position 1402 (C1402) of 16S rRNA. This chain is Ribosomal RNA small subunit methyltransferase H, found in Polaromonas naphthalenivorans (strain CJ2).